A 220-amino-acid polypeptide reads, in one-letter code: Glutathione S-transferase 2 (220 aa).

In terms of domain architecture, GST N-terminal spans 2–88 (VVTLGYWDIR…YIARKHNMCG (87 aa)). Residues 7–8 (YW), 43–46 (PSDW), Lys50, 59–60 (NL), and 72–73 (QS) contribute to the glutathione site. Residues 90 to 208 (TEVEKQRVDV…RSGRFMKAPI (119 aa)) enclose the GST C-terminal domain. Substrate is bound at residue Tyr116.

The protein belongs to the GST superfamily. Mu family. As to quaternary structure, homodimer.

The protein localises to the cytoplasm. It catalyses the reaction RX + glutathione = an S-substituted glutathione + a halide anion + H(+). Its function is as follows. Conjugation of reduced glutathione to a wide number of exogenous and endogenous hydrophobic electrophiles. Participates in the formation of novel hepoxilin regioisomers. This chain is Glutathione S-transferase 2 (GSTM2), found in Gallus gallus (Chicken).